Reading from the N-terminus, the 504-residue chain is Anaerobic nitric oxide reductase transcription regulator NorR (504 aa).

Residue D57 is modified to 4-aspartylphosphate. One can recognise a Sigma-54 factor interaction domain in the interval 187-416 (MIGLSPGMTQ…LEHAIHRAVV (230 aa)). ATP-binding positions include 215–222 (GETGTGKE) and 278–287 (ADNGTLFLDE). A DNA-binding region (H-T-H motif) is located at residues 479-498 (WAACARMLETDVANLHRLAK).

Its pathway is nitrogen metabolism; nitric oxide reduction. In terms of biological role, required for the expression of anaerobic nitric oxide (NO) reductase, acts as a transcriptional activator for at least the norVW operon. Activation also requires sigma-54. This is Anaerobic nitric oxide reductase transcription regulator NorR from Escherichia coli O157:H7.